The following is a 963-amino-acid chain: VPS35 endosomal protein-sorting factor-like (963 aa).

The disordered stretch occupies residues 43-69 (SKTKKVNRKGSTSSTSSSSSSSVVDPL). Positions 53 to 69 (STSSTSSSSSSSVVDPL) are enriched in low complexity. Ser265 carries the post-translational modification Phosphoserine. A helical transmembrane segment spans residues 703 to 719 (ACVAYCFITIPSLAGIF).

Belongs to the VPS35L family. In terms of assembly, component of the heterotrimeric retriever complex formed by VPS26C, VPS29 and VPS35L. Interacts with VPS29. Interacts with COMMD1, CCDC93 and CCDC22; associates with the CCC (COMMD/CCDC22/CCDC93) complex which contains at least COMMD1 (and possibly other COMM domain-containing proteins), CCDC22 and CCDC93. Interacts with WASHC1, WASHC2A and WASHC2C. Interacts with SNX17 and SNX31.

Its subcellular location is the membrane. The protein localises to the endosome. In terms of biological role, acts as a component of the retriever complex. The retriever complex is a heterotrimeric complex related to retromer cargo-selective complex (CSC) and essential for retromer-independent retrieval and recycling of numerous cargos such as integrin alpha-5/beta-1 (ITGA5:ITGB1). The recruitment of the retriever complex to the endosomal membrane involves CCC and WASH complexes. In the endosomes, drives the retrieval and recycling of NxxY-motif-containing cargo proteins by coupling to SNX17, a cargo essential for the homeostatic maintenance of numerous cell surface proteins associated with processes that include cell migration, cell adhesion, nutrient supply and cell signaling. Involved in copper-dependent ATP7A trafficking between the trans-Golgi network and vesicles in the cell periphery; the function is proposed to depend on its association with the CCC complex and cooperation with the WASH complex on early endosomes. Seems not to be required for CCC complex stability. Its function is as follows. (Microbial infection) The heterotrimeric retriever complex, in collaboration with the CCC complex, mediates the exit of human papillomavirus to the cell surface. This is VPS35 endosomal protein-sorting factor-like from Homo sapiens (Human).